The sequence spans 226 residues: UPF0173 metal-dependent hydrolase TM_1162 (226 aa).

The protein belongs to the UPF0173 family.

The polypeptide is UPF0173 metal-dependent hydrolase TM_1162 (Thermotoga maritima (strain ATCC 43589 / DSM 3109 / JCM 10099 / NBRC 100826 / MSB8)).